The sequence spans 235 residues: MKHGIQSQKVVAEVIKQKPTVRWLFLTLTVKNVYDGEELNKSLSDMAQGFRRMMQYKKINKNLVGFMRATEVTINNKDNSYNQHMHVLVCVEPTYFKNTENYVNQKQWIQFWKKAMKLDYDPNVKVQMIRPKNKYKSDIQSAIDETAKYPVKDTDFMTDDEEKNLKRLSDLEEGLHRKRLISYGGLLKEIHKKLNLDDTEEGDLIHTDDDEKADEDGFSIIAMWNWERKNYFIKE.

Tyr-149 provides a ligand contact to DNA.

The protein belongs to the Gram-positive plasmids replication protein type 1 family.

Produces a single-strand nick in a specific site of the plasmid, and this nick results in single-strand replication by rolling circle mechanism. In Bacillus sp, this protein is Replication protein (repB).